We begin with the raw amino-acid sequence, 309 residues long: Ankyrin repeat protein VACWR203 (309 aa).

ANK repeat units follow at residues 13–44 (SVFKGFSDKVRKNDLDMNVVKELLSNGASLTI), 110–142 (KYGTPLHILASNKKLITPNYMKLLVYNGNDINA), 160–189 (FVYHNIEYGIRYYNEKIIDAFIELGADLTI), 197–231 (PVVYCIHSNAEYGYNNITNIKIIRKLLNLSRRASH), and 269–298 (EGRTPLHCAIQHNFTQIAKYLLDRGADIVV).

Belongs to the orthopoxviruses VACWR203 protein family.

This chain is Ankyrin repeat protein VACWR203, found in Bos taurus (Bovine).